Consider the following 157-residue polypeptide: Protein EOLA1 (157 aa).

The 87-residue stretch at 6-92 (LSFRQPYAGL…IAGLIDIGET (87 aa)) folds into the ASCH domain.

Belongs to the EOLA family. As to quaternary structure, interacts with MT2A.

May play a role in cell protection during the inflammatory response. In epithelial cells, negatively regulates IL6 production and apoptosis through the regulation of MT2A expression. The protein is Protein EOLA1 of Mus musculus (Mouse).